We begin with the raw amino-acid sequence, 146 residues long: Ribonuclease P protein component (146 aa).

This sequence belongs to the RnpA family. As to quaternary structure, consists of a catalytic RNA component (M1 or rnpB) and a protein subunit.

The catalysed reaction is Endonucleolytic cleavage of RNA, removing 5'-extranucleotides from tRNA precursor.. RNaseP catalyzes the removal of the 5'-leader sequence from pre-tRNA to produce the mature 5'-terminus. It can also cleave other RNA substrates such as 4.5S RNA. The protein component plays an auxiliary but essential role in vivo by binding to the 5'-leader sequence and broadening the substrate specificity of the ribozyme. The protein is Ribonuclease P protein component of Chlorobium phaeobacteroides (strain DSM 266 / SMG 266 / 2430).